The following is a 426-amino-acid chain: Histidine--tRNA ligase (426 aa).

This sequence belongs to the class-II aminoacyl-tRNA synthetase family. Homodimer.

It is found in the cytoplasm. It carries out the reaction tRNA(His) + L-histidine + ATP = L-histidyl-tRNA(His) + AMP + diphosphate + H(+). The protein is Histidine--tRNA ligase of Streptococcus pyogenes serotype M28 (strain MGAS6180).